The sequence spans 321 residues: Probable proline iminopeptidase (321 aa).

The AB hydrolase-1 domain occupies Lys-35–Met-296. Ser-110 acts as the Nucleophile in catalysis. Asp-266 is a catalytic residue. His-294 (proton donor) is an active-site residue.

Belongs to the peptidase S33 family.

Its subcellular location is the cytoplasm. It catalyses the reaction Release of N-terminal proline from a peptide.. Functionally, specifically catalyzes the removal of N-terminal proline residues from peptides. This chain is Probable proline iminopeptidase (pip), found in Leptolyngbya boryana (Plectonema boryanum).